The chain runs to 165 residues: MSNQLKDLFERQKEASAGSKQEDNEEVLQFIGFIIGDEEYAIPILNILEIVKPIGYTRVPETPNYVLGVFNLRGNVFPLISLRLKFGLKAEKQNKDTRYLVVRHNDQIAGFFIDRLTEAIRIKQTDIDPVPETLSDNNNLTYGIGKQNDRLVTILRVEEILKKDF.

The protein belongs to the CheW family.

Its function is as follows. Plays an essential role in chemotaxis signal transduction system in order to colonize the host stomach. In Helicobacter pylori (strain ATCC 700392 / 26695) (Campylobacter pylori), this protein is Chemotaxis protein CheW.